An 84-amino-acid chain; its full sequence is Sulfur carrier protein TusA (84 aa).

Residue Cys19 is the Cysteine persulfide intermediate of the active site.

The protein belongs to the sulfur carrier protein TusA family. Interacts with IscS.

The protein resides in the cytoplasm. It functions in the pathway tRNA modification. In terms of biological role, sulfur carrier protein involved in sulfur trafficking in the cell. Part of a sulfur-relay system required for 2-thiolation during synthesis of 2-thiouridine of the modified wobble base 5-methylaminomethyl-2-thiouridine (mnm(5)s(2)U) in tRNA. Interacts with IscS and stimulates its cysteine desulfurase activity. Accepts an activated sulfur from IscS, which is then transferred to TusD, and thus determines the direction of sulfur flow from IscS to 2-thiouridine formation. Also appears to be involved in sulfur transfer for the biosynthesis of molybdopterin. The protein is Sulfur carrier protein TusA of Photorhabdus laumondii subsp. laumondii (strain DSM 15139 / CIP 105565 / TT01) (Photorhabdus luminescens subsp. laumondii).